We begin with the raw amino-acid sequence, 779 residues long: MSKVRVYEYAKEHQVSSKKVIEALKDLGIEVANHMSTINENALRQLDNAVDGTNKKAEAPKKETTSNENGNSKGPNKPNMTNSNEKSNKPNKPAGQANKPATANKSQGAKPATNKPANTSNQTQSSGTQQQAGGQKRNNSNRPGGGNSNRPGGNNRPNRGGNFNNKGRNTKKKGKLNHSTVPPTPPKPKELPEKIVFSESLTVAELAKKLYREPSELIKKLFMLGVVATINQSLDKDAIELICDDYGVQVEEEIKVDVTDLDVYFENELNEAVDESKLVERPPVVTIMGHVDHGKTTLLDSLRNTKVTLGEAGGITQHIGAYQLEIHDKKITFLDTPGHAAFTAMRARGAQITDITILVVAADDGVMPQTIEAINHAKAAGMPIIVAVNKIDKPQANPDRVMQELTEYELVPEAWGGDTIFAPISAKFGEGLENLLDMILLVSEVEELKANPDRRAIGSVIEAELDKGRGPVATLLVQDGTLNIGDPIVVGNTFGRVRAMVNDLGRRVKKVGPSTPVEITGLNDVPQAGDRFVVFEDEKTARNIGETRASRALVAQRSATNRVSLDNLFEHMKAGEMKEVNVIIKADVQGSVEALAASLRKIDVEGVNVKIIHTAVGAINESDITLAAASNAIVIGFNVRPTAQAREAAENESVDIRLHRVIYKAIDEIEAAMKGMLDPEFQEKIIGQAQVRQTINVSKVGTIAGCYVTDGKITRDSGVRIIRDGIVVFEGEIATLKRFKDDAKEVAKGYECGITVQNFNDIKEDDVIEAYVMEEIERK.

The interval 44-193 (RQLDNAVDGT…TPPKPKELPE (150 aa)) is disordered. Basic and acidic residues predominate over residues 53–65 (TNKKAEAPKKETT). Over residues 66 to 81 (SNENGNSKGPNKPNMT) the composition is skewed to polar residues. Composition is skewed to low complexity over residues 82–93 (NSNEKSNKPNKP) and 117–167 (ANTS…NNKG). Residues 280-449 (ERPPVVTIMG…LLVSEVEELK (170 aa)) form the tr-type G domain. Residues 289 to 296 (GHVDHGKT) form a G1 region. 289–296 (GHVDHGKT) is a GTP binding site. A G2 region spans residues 314-318 (GITQH). Residues 335–338 (DTPG) are G3. GTP-binding positions include 335–339 (DTPGH) and 389–392 (NKID). The interval 389-392 (NKID) is G4. The interval 425 to 427 (SAK) is G5.

The protein belongs to the TRAFAC class translation factor GTPase superfamily. Classic translation factor GTPase family. IF-2 subfamily.

The protein localises to the cytoplasm. In terms of biological role, one of the essential components for the initiation of protein synthesis. Protects formylmethionyl-tRNA from spontaneous hydrolysis and promotes its binding to the 30S ribosomal subunits. Also involved in the hydrolysis of GTP during the formation of the 70S ribosomal complex. In Listeria monocytogenes serovar 1/2a (strain ATCC BAA-679 / EGD-e), this protein is Translation initiation factor IF-2.